Consider the following 647-residue polypeptide: Exoribonuclease 2 (647 aa).

One can recognise an RNB domain in the interval 190-519 (REDLTSLPFV…NHRLLKAIIK (330 aa)). The region spanning 564–646 (EQRFSAEVID…ETRSIVARPV (83 aa)) is the S1 motif domain.

This sequence belongs to the RNR ribonuclease family. RNase II subfamily.

It localises to the cytoplasm. The enzyme catalyses Exonucleolytic cleavage in the 3'- to 5'-direction to yield nucleoside 5'-phosphates.. In terms of biological role, involved in mRNA degradation. Hydrolyzes single-stranded polyribonucleotides processively in the 3' to 5' direction. This is Exoribonuclease 2 from Erwinia tasmaniensis (strain DSM 17950 / CFBP 7177 / CIP 109463 / NCPPB 4357 / Et1/99).